Here is a 332-residue protein sequence, read N- to C-terminus: Phosphate acyltransferase (332 aa).

The protein belongs to the PlsX family. As to quaternary structure, homodimer. Probably interacts with PlsY.

The protein resides in the cytoplasm. It catalyses the reaction a fatty acyl-[ACP] + phosphate = an acyl phosphate + holo-[ACP]. Its pathway is lipid metabolism; phospholipid metabolism. In terms of biological role, catalyzes the reversible formation of acyl-phosphate (acyl-PO(4)) from acyl-[acyl-carrier-protein] (acyl-ACP). This enzyme utilizes acyl-ACP as fatty acyl donor, but not acyl-CoA. The protein is Phosphate acyltransferase of Caldanaerobacter subterraneus subsp. tengcongensis (strain DSM 15242 / JCM 11007 / NBRC 100824 / MB4) (Thermoanaerobacter tengcongensis).